We begin with the raw amino-acid sequence, 55 residues long: Ferredoxin (55 aa).

4Fe-4S ferredoxin-type domains lie at 2 to 27 (YKIT…SESD) and 28 to 55 (AVRV…IVEG). Positions 8, 11, 14, 18, 37, 40, 43, and 47 each coordinate [4Fe-4S] cluster.

The cofactor is [4Fe-4S] cluster.

Functionally, ferredoxins are iron-sulfur proteins that transfer electrons in a wide variety of metabolic reactions. The sequence is that of Ferredoxin from Clostridium sp. (strain M-E).